A 197-amino-acid polypeptide reads, in one-letter code: uncharacterized protein (197 aa).

2 disordered regions span residues 1-30 (MSDD…PKVV) and 115-174 (PSLK…KQEL). Low complexity predominate over residues 21–30 (KPTSTTPKVV). The span at 123-137 (KVDEDDDQIYEDKEE) shows a compositional bias: acidic residues. Over residues 157–170 (KSNKKVAPKQKKKS) the composition is skewed to basic residues.

This is an uncharacterized protein from Dictyostelium discoideum (Social amoeba).